Reading from the N-terminus, the 433-residue chain is Glutamate-1-semialdehyde 2,1-aminomutase (433 aa).

Lys-271 carries the N6-(pyridoxal phosphate)lysine modification.

It belongs to the class-III pyridoxal-phosphate-dependent aminotransferase family. HemL subfamily. As to quaternary structure, homodimer. Pyridoxal 5'-phosphate serves as cofactor.

The protein localises to the cytoplasm. The catalysed reaction is (S)-4-amino-5-oxopentanoate = 5-aminolevulinate. Its pathway is porphyrin-containing compound metabolism; protoporphyrin-IX biosynthesis; 5-aminolevulinate from L-glutamyl-tRNA(Glu): step 2/2. It participates in porphyrin-containing compound metabolism; chlorophyll biosynthesis. This Prochlorococcus marinus subsp. pastoris (strain CCMP1986 / NIES-2087 / MED4) protein is Glutamate-1-semialdehyde 2,1-aminomutase.